The following is a 168-amino-acid chain: Phosphopantetheine adenylyltransferase (168 aa).

Serine 8 serves as a coordination point for substrate. Residues 8–9 and histidine 16 each bind ATP; that span reads SF. Residues lysine 40, threonine 72, and arginine 86 each contribute to the substrate site. ATP is bound by residues 87–89, glutamate 97, and 122–128; these read GLR and YSFLSSS.

It belongs to the bacterial CoaD family. In terms of assembly, homohexamer. Mg(2+) serves as cofactor.

It localises to the cytoplasm. It carries out the reaction (R)-4'-phosphopantetheine + ATP + H(+) = 3'-dephospho-CoA + diphosphate. It participates in cofactor biosynthesis; coenzyme A biosynthesis; CoA from (R)-pantothenate: step 4/5. Its function is as follows. Reversibly transfers an adenylyl group from ATP to 4'-phosphopantetheine, yielding dephospho-CoA (dPCoA) and pyrophosphate. The protein is Phosphopantetheine adenylyltransferase of Thermosynechococcus vestitus (strain NIES-2133 / IAM M-273 / BP-1).